The primary structure comprises 385 residues: 4-hydroxy-3-methylbut-2-en-1-yl diphosphate synthase (flavodoxin) (385 aa).

The [4Fe-4S] cluster site is built by Cys-280, Cys-283, Cys-315, and Glu-322.

It belongs to the IspG family. Requires [4Fe-4S] cluster as cofactor.

The catalysed reaction is (2E)-4-hydroxy-3-methylbut-2-enyl diphosphate + oxidized [flavodoxin] + H2O + 2 H(+) = 2-C-methyl-D-erythritol 2,4-cyclic diphosphate + reduced [flavodoxin]. It functions in the pathway isoprenoid biosynthesis; isopentenyl diphosphate biosynthesis via DXP pathway; isopentenyl diphosphate from 1-deoxy-D-xylulose 5-phosphate: step 5/6. Its function is as follows. Converts 2C-methyl-D-erythritol 2,4-cyclodiphosphate (ME-2,4cPP) into 1-hydroxy-2-methyl-2-(E)-butenyl 4-diphosphate. In Streptomyces griseus subsp. griseus (strain JCM 4626 / CBS 651.72 / NBRC 13350 / KCC S-0626 / ISP 5235), this protein is 4-hydroxy-3-methylbut-2-en-1-yl diphosphate synthase (flavodoxin).